A 405-amino-acid chain; its full sequence is Cytoplasmic tRNA 2-thiolation protein 2 (405 aa).

It belongs to the CTU2/NCS2 family.

The protein localises to the cytoplasm. It functions in the pathway tRNA modification; 5-methoxycarbonylmethyl-2-thiouridine-tRNA biosynthesis. In terms of biological role, plays a central role in 2-thiolation of mcm(5)S(2)U at tRNA wobble positions of tRNA(Lys), tRNA(Glu) and tRNA(Gln). May act by forming a heterodimer with NCS6/CTU1 that ligates sulfur from thiocarboxylated URM1 onto the uridine of tRNAs at wobble position. This Drosophila melanogaster (Fruit fly) protein is Cytoplasmic tRNA 2-thiolation protein 2.